Consider the following 444-residue polypeptide: Orexin receptor type 2 (444 aa).

The segment covering 1-10 (MSGTKLEDSP) has biased composition (basic and acidic residues). Positions 1–30 (MSGTKLEDSPPCRNWSSAPELNETQEPFLN) are disordered. Residues 1 to 54 (MSGTKLEDSPPCRNWSSAPELNETQEPFLNPTDYDDEEFLRYLWREYLHPKEYE) lie on the Extracellular side of the membrane. Residues asparagine 14 and asparagine 22 are each glycosylated (N-linked (GlcNAc...) asparagine). Residues 14–27 (NWSSAPELNETQEP) show a composition bias toward polar residues. Residues 33–49 (DYDDEEFLRYLWREYLH) form a required for response to orexin-A region. A helical transmembrane segment spans residues 55-75 (WVLIAGYIIVFVVALVGNVLV). The Cytoplasmic portion of the chain corresponds to 76 to 88 (CVAVWKNHHMRTV). The chain crosses the membrane as a helical span at residues 89-110 (TNYFIVNLSLADVLVTITCLPA). Over 111 to 127 (TLVVDITETWFFGQSLC) the chain is Extracellular. Cysteines 127 and 210 form a disulfide. The chain crosses the membrane as a helical span at residues 128–150 (KVIPYLQTVSVSVSVLTLSCIAL). Residues 151–170 (DRWYAICHPLMFKSTAKRAR) lie on the Cytoplasmic side of the membrane. The helical transmembrane segment at 171–191 (NSIVIIWIVSCIIMIPQAIVM) threads the bilayer. Residues 192–222 (ECSTMLPGLANKTTLFTVCDERWGGEIYPKM) are Extracellular-facing. Asparagine 202 carries N-linked (GlcNAc...) asparagine glycosylation. The chain crosses the membrane as a helical span at residues 223–243 (YHICFFLVTYMAPLCLMVLAY). At 244–304 (LQIFRKLWCR…QIRARRKTAR (61 aa)) the chain is on the cytoplasmic side. The helical transmembrane segment at 305-326 (MLMVVLLVFAICYLPISILNVL) threads the bilayer. Residues 327–342 (KRVFGMFTHTEDRETV) are Extracellular-facing. A helical membrane pass occupies residues 343-366 (YAWFTFSHWLVYANSAANPIIYNF). Residues 367–444 (LSGKFREEFK…ANGAGPLQNW (78 aa)) lie on the Cytoplasmic side of the membrane.

The protein belongs to the G-protein coupled receptor 1 family.

The protein resides in the cell membrane. Functionally, nonselective, high-affinity receptor for both orexin-A and orexin-B neuropeptides. Triggers an increase in cytoplasmic Ca(2+) levels in response to orexin-A binding. This chain is Orexin receptor type 2 (HCRTR2), found in Canis lupus familiaris (Dog).